Consider the following 79-residue polypeptide: Acyl carrier protein (79 aa).

One can recognise a Carrier domain in the interval 2-77; the sequence is ENIEQRVKKI…QAIDYVTAHL (76 aa). O-(pantetheine 4'-phosphoryl)serine is present on serine 37.

Belongs to the acyl carrier protein (ACP) family. Post-translationally, 4'-phosphopantetheine is transferred from CoA to a specific serine of apo-ACP by AcpS. This modification is essential for activity because fatty acids are bound in thioester linkage to the sulfhydryl of the prosthetic group.

The protein localises to the cytoplasm. Its pathway is lipid metabolism; fatty acid biosynthesis. Its function is as follows. Carrier of the growing fatty acid chain in fatty acid biosynthesis. This is Acyl carrier protein from Laribacter hongkongensis (strain HLHK9).